Here is a 137-residue protein sequence, read N- to C-terminus: Nucleoside diphosphate kinase (137 aa).

The ATP site is built by Lys-9, Phe-57, Arg-85, Thr-91, Arg-102, and Asn-112. The active-site Pros-phosphohistidine intermediate is the His-115.

It belongs to the NDK family. As to quaternary structure, homotetramer. Mg(2+) is required as a cofactor.

It localises to the cytoplasm. The enzyme catalyses a 2'-deoxyribonucleoside 5'-diphosphate + ATP = a 2'-deoxyribonucleoside 5'-triphosphate + ADP. It catalyses the reaction a ribonucleoside 5'-diphosphate + ATP = a ribonucleoside 5'-triphosphate + ADP. Major role in the synthesis of nucleoside triphosphates other than ATP. The ATP gamma phosphate is transferred to the NDP beta phosphate via a ping-pong mechanism, using a phosphorylated active-site intermediate. The sequence is that of Nucleoside diphosphate kinase from Campylobacter hominis (strain ATCC BAA-381 / DSM 21671 / CCUG 45161 / LMG 19568 / NCTC 13146 / CH001A).